The sequence spans 411 residues: MTGQTAPAAPEDANVLGLPETKVRKFNINFGPQHPAAHGVLRLVLELDGEVVERVDPHIGLLHRGTEKLMEARPYAQTIPYFDRLDYVAPMNQEHAYCLAIEKLLGVEVPVRGLLIRTLYDEIGRILNHLLNVTTQAMDVGALTPPLWGFEEREKLMIFYERASGARLHANYYRVGGVRQDLPPELVQDISDWCDAFPKILDDIEGLITDNRIFKQRNVDIGVVTKEEAIAWGFSGVMVRGSGIPWDLRRSQPYALYSEMEFDIPLGVNGDCYDRYLCRMQEMRESTKIMKQCCERLLKTSGPVLVDDHKVSPPRRGEMKRSMEALIHHFKLYTEGYRTPPGDVYACVEAPKGEFGVYLVSNGTNKPYRCKIRAPGYPHLQAMDWMNRGHMLADVSAILGSLDIVFGEIDR.

It belongs to the complex I 49 kDa subunit family. NDH-1 is composed of 14 different subunits. Subunits NuoB, C, D, E, F, and G constitute the peripheral sector of the complex.

The protein localises to the cell inner membrane. It catalyses the reaction a quinone + NADH + 5 H(+)(in) = a quinol + NAD(+) + 4 H(+)(out). Functionally, NDH-1 shuttles electrons from NADH, via FMN and iron-sulfur (Fe-S) centers, to quinones in the respiratory chain. The immediate electron acceptor for the enzyme in this species is believed to be ubiquinone. Couples the redox reaction to proton translocation (for every two electrons transferred, four hydrogen ions are translocated across the cytoplasmic membrane), and thus conserves the redox energy in a proton gradient. The protein is NADH-quinone oxidoreductase subunit D of Phenylobacterium zucineum (strain HLK1).